The primary structure comprises 131 residues: Small ribosomal subunit protein uS11 (131 aa).

The protein belongs to the universal ribosomal protein uS11 family. Part of the 30S ribosomal subunit. Interacts with proteins S7 and S18. Binds to IF-3.

Functionally, located on the platform of the 30S subunit, it bridges several disparate RNA helices of the 16S rRNA. Forms part of the Shine-Dalgarno cleft in the 70S ribosome. The protein is Small ribosomal subunit protein uS11 of Wigglesworthia glossinidia brevipalpis.